A 365-amino-acid polypeptide reads, in one-letter code: Putative clathrin assembly protein At4g40080 (365 aa).

The ENTH domain maps to 29 to 167; it reads NTKSKTLSFH…STSRIMGFFI (139 aa).

The protein localises to the membrane. It localises to the clathrin-coated pit. It is found in the golgi apparatus. Its subcellular location is the cytoplasmic vesicle. The protein resides in the clathrin-coated vesicle. The chain is Putative clathrin assembly protein At4g40080 from Arabidopsis thaliana (Mouse-ear cress).